Here is a 539-residue protein sequence, read N- to C-terminus: Membrane protein insertase YidC (539 aa).

The chain crosses the membrane as a helical span at residues 6-26 (NILLIALALVSFLLFQQWNVA). A compositionally biased stretch (polar residues) spans 35-44 (EQAQSGSTLP). The segment at 35–55 (EQAQSGSTLPAPSYADDLDPA) is disordered. 4 helical membrane-spanning segments follow: residues 341–361 (SFIQGIVVNWGLAIICLTFIV), 416–436 (LGGCLPILLQMPIFISLYWAL), 454–474 (LSAQDPYYILPLLMGASMFLI), and 495–515 (PVMFTFFFLFFPSGLVLYWLV).

The protein belongs to the OXA1/ALB3/YidC family. Type 1 subfamily. As to quaternary structure, interacts with the Sec translocase complex via SecD. Specifically interacts with transmembrane segments of nascent integral membrane proteins during membrane integration.

The protein resides in the cell inner membrane. Functionally, required for the insertion and/or proper folding and/or complex formation of integral membrane proteins into the membrane. Involved in integration of membrane proteins that insert both dependently and independently of the Sec translocase complex, as well as at least some lipoproteins. Aids folding of multispanning membrane proteins. This is Membrane protein insertase YidC from Vibrio atlanticus (strain LGP32) (Vibrio splendidus (strain Mel32)).